The sequence spans 225 residues: Large ribosomal subunit protein bL25 (225 aa).

The interval Pro-197–Glu-225 is disordered. Acidic residues predominate over residues Gln-202–Glu-225.

The protein belongs to the bacterial ribosomal protein bL25 family. CTC subfamily. Part of the 50S ribosomal subunit; part of the 5S rRNA/L5/L18/L25 subcomplex. Contacts the 5S rRNA. Binds to the 5S rRNA independently of L5 and L18.

In terms of biological role, this is one of the proteins that binds to the 5S RNA in the ribosome where it forms part of the central protuberance. The protein is Large ribosomal subunit protein bL25 of Dichelobacter nodosus (strain VCS1703A).